Here is a 333-residue protein sequence, read N- to C-terminus: tRNA pseudouridine synthase B (333 aa).

Residue aspartate 46 is the Nucleophile of the active site.

It belongs to the pseudouridine synthase TruB family. Type 1 subfamily.

It catalyses the reaction uridine(55) in tRNA = pseudouridine(55) in tRNA. In terms of biological role, responsible for synthesis of pseudouridine from uracil-55 in the psi GC loop of transfer RNAs. The chain is tRNA pseudouridine synthase B from Gluconobacter oxydans (strain 621H) (Gluconobacter suboxydans).